The sequence spans 476 residues: Neuropeptide-like precursor 1 (476 aa).

A signal peptide spans 1 to 34; sequence MNDAGASIGRHRGCLLLFVALAVAFSSYVEQVES. Val-133 is subject to Valine amide. 2 consecutive propeptides follow at residues 160–232 and 259–476; these read DEAT…NSYF and YVMP…RKNQ. Disordered regions lie at residues 275-298 and 360-385; these read QNDIDGEKRSVDDDDDDDDDDGEV and PEVESPVDPDDADIPPPPVPAHSHPT. Residues 286 to 297 show a composition bias toward acidic residues; the sequence is DDDDDDDDDDGE.

In terms of tissue distribution, neuropeptide-like precursor 1-1: Expressed in antennal lobe (AL), corpora cardiaca (CC), corpora allata (CA) and gnathal ganglion (GNG) (at protein level). Expression in AL detected in all animals, in GNG in most animals, expression in CC and CA in few animals (at protein level). Neuropeptide-like precursor 1-2: Expressed in antennal lobe (AL), corpora cardiaca (CC), corpora allata (CA) and gnathal ganglion (GNG) (at protein level). Expression in AL detected in all animals, in GNG in some animals, expression in CC and CA in few animals (at protein level). Neuropeptide-like precursor 1-3: Not expressed in antennal lobe (AL), corpora cardiaca (CC), corpora allata (CA) and gnathal ganglion (GNG) (at protein level). Neuropeptide-like precursor 1-4: Expressed in antennal lobe (AL) and gnathal ganglion (GNG) (at protein level). Expression in AL detected in most animals, in GNG in some animals (at protein level). Not expressed in CC and CA (at protein level). YRVamide: Expressed in antennal lobe (AL), corpora cardiaca (CC), corpora allata (CA) and gnathal ganglion (GNG) (at protein level). Expression in AL and GNG detected in most animals, expression in CC and CA in few animals (at protein level). Extended YRVamide: Expressed in antennal lobe (AL) and gnathal ganglion (GNG) (at protein level). Expression in AL detected in most animals, in GNG in some animals (at protein level). Not expressed in corpora cardiaca (CC) and corpora allata (CA) (at protein level). Neuropeptide-like precursor 1-6: Expressed in antennal lobe (AL), corpora cardiaca (CC), corpora allata (CA) and gnathal ganglion (GNG) (at protein level). Expression in GNG detected in all animals, expression in AL in most animals, in CC and CA in few animals (at protein level). Neuropeptide-like precursor 1-6(1-11): Expressed in antennal lobe (AL) and gnathal ganglion (GNG) in most animals (at protein level). Not expressed in corpora cardiaca (CC) and corpora allata (CA) (at protein level). Neuropeptide-like precursor 1-9: Expressed in antennal lobe (AL) and gnathal ganglion (GNG) (at protein level). Expression in AL detected in all animals in GNG in most (at protein level). Not expressed in corpora cardiaca (CC) and corpora allata (CA) (at protein level).

The protein resides in the secreted. In Agrotis ipsilon (Black cutworm moth), this protein is Neuropeptide-like precursor 1.